The primary structure comprises 206 residues: Large ribosomal subunit protein uL4 (206 aa).

The interval 47–71 (TRAQKGRSEVAGSTRKQWRQKGTGR) is disordered.

The protein belongs to the universal ribosomal protein uL4 family. Part of the 50S ribosomal subunit.

Its function is as follows. One of the primary rRNA binding proteins, this protein initially binds near the 5'-end of the 23S rRNA. It is important during the early stages of 50S assembly. It makes multiple contacts with different domains of the 23S rRNA in the assembled 50S subunit and ribosome. Functionally, forms part of the polypeptide exit tunnel. The chain is Large ribosomal subunit protein uL4 from Nitrosomonas eutropha (strain DSM 101675 / C91 / Nm57).